The primary structure comprises 182 residues: Chromophore lyase CpcS/CpeS (182 aa).

This sequence belongs to the CpcS/CpeS biliprotein lyase family.

Functionally, covalently attaches a chromophore to Cys residue(s) of phycobiliproteins. The chain is Chromophore lyase CpcS/CpeS from Thermosynechococcus vestitus (strain NIES-2133 / IAM M-273 / BP-1).